The chain runs to 592 residues: Testis-specific serine kinase substrate (592 aa).

Ser217 is subject to Phosphoserine. A disordered region spans residues 232–308 (QDETPRRQEA…VPAGWGMGPR (77 aa)). The span at 234 to 264 (ETPRRQEAELQEPEEKQEPEEKQEPEEKQKP) shows a compositional bias: basic and acidic residues. Positions 269 to 281 (SWNSLGPAATSQG) are enriched in polar residues. Ser288 is modified (phosphoserine; by TSSK1 and TSSK2). The residue at position 316 (Ser316) is a Phosphoserine. Residues 566–592 (LEGSTGTMGGGSSAGTPPKQGGSAPEQ) form a disordered region.

Post-translationally, phosphorylated on serine residue(s) by STK22A/TSSK1 and STK22B/TSSK2. In terms of tissue distribution, highly expressed in testis. Expressed at low levels in prostate, female breast, placenta, ovary and thymus.

It is found in the cytoplasm. It localises to the cytoskeleton. Its subcellular location is the microtubule organizing center. The protein localises to the centrosome. The protein resides in the centriole. Its function is as follows. May play a role in testicular physiology, most probably in the process of spermatogenesis or spermatid development. In Homo sapiens (Human), this protein is Testis-specific serine kinase substrate (TSKS).